Consider the following 157-residue polypeptide: SsrA-binding protein (157 aa).

The disordered stretch occupies residues 133-157 (LHDKRETEKKRDWSREKGRLLRARG). The segment covering 135 to 151 (DKRETEKKRDWSREKGR) has biased composition (basic and acidic residues).

The protein belongs to the SmpB family.

It is found in the cytoplasm. Its function is as follows. Required for rescue of stalled ribosomes mediated by trans-translation. Binds to transfer-messenger RNA (tmRNA), required for stable association of tmRNA with ribosomes. tmRNA and SmpB together mimic tRNA shape, replacing the anticodon stem-loop with SmpB. tmRNA is encoded by the ssrA gene; the 2 termini fold to resemble tRNA(Ala) and it encodes a 'tag peptide', a short internal open reading frame. During trans-translation Ala-aminoacylated tmRNA acts like a tRNA, entering the A-site of stalled ribosomes, displacing the stalled mRNA. The ribosome then switches to translate the ORF on the tmRNA; the nascent peptide is terminated with the 'tag peptide' encoded by the tmRNA and targeted for degradation. The ribosome is freed to recommence translation, which seems to be the essential function of trans-translation. The sequence is that of SsrA-binding protein from Bradyrhizobium diazoefficiens (strain JCM 10833 / BCRC 13528 / IAM 13628 / NBRC 14792 / USDA 110).